A 547-amino-acid chain; its full sequence is Glucose-6-phosphate isomerase (547 aa).

Glutamate 353 acts as the Proton donor in catalysis. Catalysis depends on residues histidine 384 and lysine 512.

This sequence belongs to the GPI family.

The protein localises to the cytoplasm. It catalyses the reaction alpha-D-glucose 6-phosphate = beta-D-fructose 6-phosphate. It functions in the pathway carbohydrate biosynthesis; gluconeogenesis. Its pathway is carbohydrate degradation; glycolysis; D-glyceraldehyde 3-phosphate and glycerone phosphate from D-glucose: step 2/4. Functionally, catalyzes the reversible isomerization of glucose-6-phosphate to fructose-6-phosphate. The chain is Glucose-6-phosphate isomerase from Campylobacter jejuni subsp. doylei (strain ATCC BAA-1458 / RM4099 / 269.97).